The following is a 275-amino-acid chain: Formamidopyrimidine-DNA glycosylase (275 aa).

The active-site Schiff-base intermediate with DNA is P2. E3 (proton donor) is an active-site residue. K58 (proton donor; for beta-elimination activity) is an active-site residue. 3 residues coordinate DNA: H91, R109, and K154. Residues A240–K274 form an FPG-type zinc finger. R264 serves as the catalytic Proton donor; for delta-elimination activity.

It belongs to the FPG family. In terms of assembly, monomer. The cofactor is Zn(2+).

It catalyses the reaction Hydrolysis of DNA containing ring-opened 7-methylguanine residues, releasing 2,6-diamino-4-hydroxy-5-(N-methyl)formamidopyrimidine.. The catalysed reaction is 2'-deoxyribonucleotide-(2'-deoxyribose 5'-phosphate)-2'-deoxyribonucleotide-DNA = a 3'-end 2'-deoxyribonucleotide-(2,3-dehydro-2,3-deoxyribose 5'-phosphate)-DNA + a 5'-end 5'-phospho-2'-deoxyribonucleoside-DNA + H(+). In terms of biological role, involved in base excision repair of DNA damaged by oxidation or by mutagenic agents. Acts as a DNA glycosylase that recognizes and removes damaged bases. Has a preference for oxidized purines, such as 7,8-dihydro-8-oxoguanine (8-oxoG). Has AP (apurinic/apyrimidinic) lyase activity and introduces nicks in the DNA strand. Cleaves the DNA backbone by beta-delta elimination to generate a single-strand break at the site of the removed base with both 3'- and 5'-phosphates. The protein is Formamidopyrimidine-DNA glycosylase of Bordetella avium (strain 197N).